Here is a 361-residue protein sequence, read N- to C-terminus: Deoxyhypusine hydroxylase (361 aa).

HEAT-like PBS-type repeat units lie at residues 59–85 (LKHELAYVLGQLLNTRALPTLSRVLEN), 94–120 (VRHEAAEALGAIGAEESLPILRKYMQD), 183–211 (QRYRAMFALRDFGAGSKEAVEALADGFRD), and 216–242 (FRHEIAYIFGQLSSPYSIPSLLSRLRD). Fe cation-binding residues include His-61, Glu-62, His-96, and Glu-97. His-218, Glu-219, His-251, and Glu-252 together coordinate Fe cation.

This sequence belongs to the deoxyhypusine hydroxylase family. Fe(2+) serves as cofactor.

It is found in the cytoplasm. Its subcellular location is the nucleus. The enzyme catalyses [eIF5A protein]-deoxyhypusine + AH2 + O2 = [eIF5A protein]-hypusine + A + H2O. The protein operates within protein modification; eIF5A hypusination. In terms of biological role, catalyzes the hydroxylation of the N(6)-(4-aminobutyl)-L-lysine intermediate to form hypusine, an essential post-translational modification only found in mature eIF-5A factor. In Cryptococcus neoformans var. neoformans serotype D (strain JEC21 / ATCC MYA-565) (Filobasidiella neoformans), this protein is Deoxyhypusine hydroxylase.